Here is a 147-residue protein sequence, read N- to C-terminus: Hemoglobin subunit epsilon (147 aa).

The Globin domain maps to 3–147 (HFTAEEKSTI…VATALAHKYH (145 aa)). Phosphoserine occurs at positions 14 and 51. Positions 64 and 93 each coordinate heme b.

The protein belongs to the globin family. In terms of assembly, heterotetramer of two alpha chains and two epsilon chains in early embryonic hemoglobin Gower-2; two zeta chains and two epsilon chains in early embryonic hemoglobin Gower-1. In terms of tissue distribution, red blood cells.

Its function is as follows. The epsilon chain is a beta-type chain of early mammalian embryonic hemoglobin. This chain is Hemoglobin subunit epsilon (HBE1), found in Propithecus verreauxi (White sifaka).